Reading from the N-terminus, the 210-residue chain is Thymidylate kinase (210 aa).

Residue 11–18 (GGEGAGKT) coordinates ATP.

This sequence belongs to the thymidylate kinase family.

The enzyme catalyses dTMP + ATP = dTDP + ADP. Its function is as follows. Phosphorylation of dTMP to form dTDP in both de novo and salvage pathways of dTTP synthesis. The protein is Thymidylate kinase (tmk) of Halalkalibacterium halodurans (strain ATCC BAA-125 / DSM 18197 / FERM 7344 / JCM 9153 / C-125) (Bacillus halodurans).